The following is a 499-amino-acid chain: Probable cytosol aminopeptidase (499 aa).

The Mn(2+) site is built by lysine 269 and aspartate 274. The active site involves lysine 281. Mn(2+) contacts are provided by aspartate 292, aspartate 351, and glutamate 353. Arginine 355 is a catalytic residue.

This sequence belongs to the peptidase M17 family. Mn(2+) serves as cofactor.

It is found in the cytoplasm. It catalyses the reaction Release of an N-terminal amino acid, Xaa-|-Yaa-, in which Xaa is preferably Leu, but may be other amino acids including Pro although not Arg or Lys, and Yaa may be Pro. Amino acid amides and methyl esters are also readily hydrolyzed, but rates on arylamides are exceedingly low.. The catalysed reaction is Release of an N-terminal amino acid, preferentially leucine, but not glutamic or aspartic acids.. Presumably involved in the processing and regular turnover of intracellular proteins. Catalyzes the removal of unsubstituted N-terminal amino acids from various peptides. In Actinobacillus pleuropneumoniae serotype 3 (strain JL03), this protein is Probable cytosol aminopeptidase.